Consider the following 277-residue polypeptide: Outer membrane lipoprotein 1 (277 aa).

Residues 1 to 19 (MSFKKILGVALVSALALTA) form the signal peptide. Residue Cys-20 is the site of N-palmitoyl cysteine attachment. Residue Cys-20 is the site of S-diacylglycerol cysteine attachment.

The protein belongs to the NlpA lipoprotein family.

It localises to the cell outer membrane. The chain is Outer membrane lipoprotein 1 (plpA) from Mannheimia haemolytica (Pasteurella haemolytica).